Reading from the N-terminus, the 152-residue chain is Glutamyl-tRNA(Gln) amidotransferase subunit F, mitochondrial (152 aa).

It belongs to the GatF family. Subunit of the heterotrimeric GatFAB amidotransferase (AdT) complex, composed of A, B and F subunits.

Its subcellular location is the mitochondrion inner membrane. The catalysed reaction is L-glutamyl-tRNA(Gln) + L-glutamine + ATP + H2O = L-glutaminyl-tRNA(Gln) + L-glutamate + ADP + phosphate + H(+). Functionally, allows the formation of correctly charged Gln-tRNA(Gln) through the transamidation of misacylated Glu-tRNA(Gln) in the mitochondria. The reaction takes place in the presence of glutamine and ATP through an activated gamma-phospho-Glu-tRNA(Gln). Required for proper protein synthesis within the mitochondrion. This chain is Glutamyl-tRNA(Gln) amidotransferase subunit F, mitochondrial, found in Komagataella phaffii (strain GS115 / ATCC 20864) (Yeast).